The chain runs to 85 residues: Large ribosomal subunit protein bL27 (85 aa).

It belongs to the bacterial ribosomal protein bL27 family.

This Campylobacter concisus (strain 13826) protein is Large ribosomal subunit protein bL27.